The chain runs to 496 residues: Probable cytosol aminopeptidase (496 aa).

Positions 264 and 269 each coordinate Mn(2+). Lysine 276 is an active-site residue. Residues aspartate 287, aspartate 346, and glutamate 348 each coordinate Mn(2+). The active site involves arginine 350.

Belongs to the peptidase M17 family. Mn(2+) is required as a cofactor.

The protein resides in the cytoplasm. The enzyme catalyses Release of an N-terminal amino acid, Xaa-|-Yaa-, in which Xaa is preferably Leu, but may be other amino acids including Pro although not Arg or Lys, and Yaa may be Pro. Amino acid amides and methyl esters are also readily hydrolyzed, but rates on arylamides are exceedingly low.. The catalysed reaction is Release of an N-terminal amino acid, preferentially leucine, but not glutamic or aspartic acids.. Presumably involved in the processing and regular turnover of intracellular proteins. Catalyzes the removal of unsubstituted N-terminal amino acids from various peptides. This is Probable cytosol aminopeptidase from Geobacter sulfurreducens (strain ATCC 51573 / DSM 12127 / PCA).